The primary structure comprises 248 residues: tRNA (guanine-N(1)-)-methyltransferase (248 aa).

S-adenosyl-L-methionine-binding positions include Gly116 and 135–140; that span reads IGDFVL.

Belongs to the RNA methyltransferase TrmD family. Homodimer.

The protein resides in the cytoplasm. The enzyme catalyses guanosine(37) in tRNA + S-adenosyl-L-methionine = N(1)-methylguanosine(37) in tRNA + S-adenosyl-L-homocysteine + H(+). In terms of biological role, specifically methylates guanosine-37 in various tRNAs. In Anaeromyxobacter sp. (strain Fw109-5), this protein is tRNA (guanine-N(1)-)-methyltransferase.